We begin with the raw amino-acid sequence, 266 residues long: GTP cyclohydrolase FolE2 (266 aa).

The protein belongs to the GTP cyclohydrolase IV family.

The enzyme catalyses GTP + H2O = 7,8-dihydroneopterin 3'-triphosphate + formate + H(+). Its pathway is cofactor biosynthesis; 7,8-dihydroneopterin triphosphate biosynthesis; 7,8-dihydroneopterin triphosphate from GTP: step 1/1. In terms of biological role, converts GTP to 7,8-dihydroneopterin triphosphate. This is GTP cyclohydrolase FolE2 from Methylobacillus flagellatus (strain ATCC 51484 / DSM 6875 / VKM B-1610 / KT).